The primary structure comprises 80 residues: Acyl carrier protein (80 aa).

One can recognise a Carrier domain in the interval 4–79; that stretch reads EEIKDKVFDI…QAIDYIVNAK (76 aa). S39 bears the O-(pantetheine 4'-phosphoryl)serine mark.

The protein belongs to the acyl carrier protein (ACP) family. In terms of processing, 4'-phosphopantetheine is transferred from CoA to a specific serine of apo-ACP by AcpS. This modification is essential for activity because fatty acids are bound in thioester linkage to the sulfhydryl of the prosthetic group.

It localises to the cytoplasm. The protein operates within lipid metabolism; fatty acid biosynthesis. Carrier of the growing fatty acid chain in fatty acid biosynthesis. This Prosthecochloris aestuarii (strain DSM 271 / SK 413) protein is Acyl carrier protein.